The chain runs to 361 residues: Ribosomal RNA large subunit methyltransferase M (361 aa).

S-adenosyl-L-methionine-binding positions include serine 193, 226 to 229, aspartate 245, aspartate 265, and aspartate 283; that span reads CPGG. The Proton acceptor role is filled by lysine 312.

Belongs to the class I-like SAM-binding methyltransferase superfamily. RNA methyltransferase RlmE family. RlmM subfamily. As to quaternary structure, monomer.

The protein resides in the cytoplasm. The catalysed reaction is cytidine(2498) in 23S rRNA + S-adenosyl-L-methionine = 2'-O-methylcytidine(2498) in 23S rRNA + S-adenosyl-L-homocysteine + H(+). Functionally, catalyzes the 2'-O-methylation at nucleotide C2498 in 23S rRNA. In Histophilus somni (strain 2336) (Haemophilus somnus), this protein is Ribosomal RNA large subunit methyltransferase M.